The chain runs to 333 residues: Sphingomyelinase C (333 aa).

Residues 1-27 form the signal peptide; it reads MKGKLLKGVLSLGVGLGALYSGTSAQA. An intrachain disulfide couples cysteine 150 to cysteine 186.

This sequence belongs to the neutral sphingomyelinase family. Requires Mg(2+) as cofactor.

It is found in the secreted. It carries out the reaction a sphingomyelin + H2O = phosphocholine + an N-acylsphing-4-enine + H(+). With respect to regulation, activated by cobalt and manganese ions. Required, with sphingomyelinase, to effect target cell lysis (hemolysis). The polypeptide is Sphingomyelinase C (sph) (Bacillus cereus).